Reading from the N-terminus, the 250-residue chain is Large ribosomal subunit protein uL13c (250 aa).

Residues 1–47 constitute a chloroplast transit peptide; sequence MATMACASSLTFPSAQTQKSFFGTNVKQTPVLSFPRPTVAAAVAVSA.

As to quaternary structure, component of the chloroplast large ribosomal subunit (LSU). Mature 70S chloroplast ribosomes of higher plants consist of a small (30S) and a large (50S) subunit. The 30S small subunit contains 1 molecule of ribosomal RNA (16S rRNA) and 24 different proteins. The 50S large subunit contains 3 rRNA molecules (23S, 5S and 4.5S rRNA) and 33 different proteins.

The protein resides in the plastid. It localises to the chloroplast. Component of the chloroplast ribosome (chloro-ribosome), a dedicated translation machinery responsible for the synthesis of chloroplast genome-encoded proteins, including proteins of the transcription and translation machinery and components of the photosynthetic apparatus. The protein is Large ribosomal subunit protein uL13c (RPL13) of Spinacia oleracea (Spinach).